The primary structure comprises 557 residues: Potassium-transporting ATPase potassium-binding subunit (557 aa).

Transmembrane regions (helical) follow at residues 6 to 26 (IQLLIFLFALLIFSPLFGLGL), 59 to 79 (ALSLLVFNFFGFLLLFLILFF), 127 to 147 (AGLTTQNFLSATTGLCVLLAL), 172 to 192 (LYVLLPLSFIFALFLVGFGVV), 247 to 267 (ISNFLQMFSILILPGACVFLY), 278 to 298 (WAIFSVMFTILCVGILIVWTF), 363 to 383 (IVFGGVGAGMYGMILFVLLTV), 410 to 430 (ILGILLPSTIILLFTAISVSV), 475 to 495 (VMIAIAMILGRFGVILPVLVI), and 520 to 540 (FYILLLSVIIIVGALTFFPVL).

Belongs to the KdpA family. In terms of assembly, the system is composed of three essential subunits: KdpA, KdpB and KdpC.

It localises to the cell inner membrane. In terms of biological role, part of the high-affinity ATP-driven potassium transport (or Kdp) system, which catalyzes the hydrolysis of ATP coupled with the electrogenic transport of potassium into the cytoplasm. This subunit binds the periplasmic potassium ions and delivers the ions to the membrane domain of KdpB through an intramembrane tunnel. This is Potassium-transporting ATPase potassium-binding subunit from Leptospira interrogans serogroup Icterohaemorrhagiae serovar Lai (strain 56601).